Here is a 76-residue protein sequence, read N- to C-terminus: Kappa-actitoxin-Avd4m (76 aa).

The signal sequence occupies residues 1-19; it reads MNKALFLCLVVLCAAVVFA. Residues 20–31 constitute a propeptide that is removed on maturation; it reads AEDLQKAKHAPF. 3 disulfides stabilise this stretch: Cys-37-Cys-72, Cys-39-Cys-65, and Cys-55-Cys-73.

Belongs to the sea anemone type 3 (BDS) potassium channel toxin family. In terms of tissue distribution, weakly expressed in the ectodermal tissue from the distal and proximal tentacles, body wall, and oral disk.

The protein resides in the secreted. It localises to the nematocyst. Its function is as follows. Blocks Kv3 voltage-gated potassium channels. Reduces blood pressure. This is Kappa-actitoxin-Avd4m from Anemonia viridis (Snakelocks anemone).